The following is a 211-amino-acid chain: Guanylate kinase (211 aa).

Positions 7–187 (GLLIILSGPS…AADRIIAIIR (181 aa)) constitute a Guanylate kinase-like domain. 14–21 (GPSGVGKA) contacts ATP.

This sequence belongs to the guanylate kinase family.

It is found in the cytoplasm. The enzyme catalyses GMP + ATP = GDP + ADP. In terms of biological role, essential for recycling GMP and indirectly, cGMP. The chain is Guanylate kinase from Aster yellows witches'-broom phytoplasma (strain AYWB).